The primary structure comprises 640 residues: MPVITLPDGSQRSFDHAVSIAEVAASIGAGLAKATVAGKVDGKLVDACDLISNDATLQIITPKDEEGLEIIRHSCAHLVGHAVKQLYPTAKMVIGPVIDEGFYYDIAYERPFTPEDMAAIEKRMMELIEKDYDVVKKMTPRAEVIDVFTARGEDYKLRLVEDMPDEQAMGLYYHEEYVDMCRGPHVPNTRFLKAFKLTKLSGAYWRGDAKNEQLQRVYGTAWADKKQLAAYIQRIEEAEKRDHRKIGKQLDLFHLQEEAPGMVFWHANGWTVYQVLEQYMRGVQRENGYQEIKTPQVVDRILWERSGHWSNYAENMFTTSSESRDYAVKPMNCPCHVQVFNQGLKSYRDLPLRLAEFGACHRNEPSGALHGIMRVRGFVQDDAHIFCTEEQVKKEAADFIKLTLDVYKDFGFSDIAMKLSTRPAKRVGSEELWDRAETALADALNESGLEWEYQPGEGAFYGPKIEFTLRDCLGRNWQCGTLQYDPNLPERLDASYIAEDNSRVRPVMLHRAILGSFERFIGMLIEHYAGVFPAWLAPTQAVIMNITDKQTDFALEVEKSLNGSGFRAKSDLRNEKIGFKIREHTLLKVPYLLVIGDREVETQTVAVRTREGADLGSMPVAQFVELLTQAVSRRGRQESE.

A TGS domain is found at 1–61; sequence MPVITLPDGS…SNDATLQIIT (61 aa). The catalytic stretch occupies residues 242–533; that stretch reads DHRKIGKQLD…LIEHYAGVFP (292 aa). Residues C333, H384, and H510 each coordinate Zn(2+).

It belongs to the class-II aminoacyl-tRNA synthetase family. In terms of assembly, homodimer. It depends on Zn(2+) as a cofactor.

The protein localises to the cytoplasm. The enzyme catalyses tRNA(Thr) + L-threonine + ATP = L-threonyl-tRNA(Thr) + AMP + diphosphate + H(+). In terms of biological role, catalyzes the attachment of threonine to tRNA(Thr) in a two-step reaction: L-threonine is first activated by ATP to form Thr-AMP and then transferred to the acceptor end of tRNA(Thr). Also edits incorrectly charged L-seryl-tRNA(Thr). The polypeptide is Threonine--tRNA ligase (Pseudomonas putida (strain ATCC 700007 / DSM 6899 / JCM 31910 / BCRC 17059 / LMG 24140 / F1)).